The chain runs to 124 residues: Large ribosomal subunit protein uL18 (124 aa).

Belongs to the universal ribosomal protein uL18 family. Part of the 50S ribosomal subunit; part of the 5S rRNA/L5/L18/L25 subcomplex. Contacts the 5S and 23S rRNAs.

This is one of the proteins that bind and probably mediate the attachment of the 5S RNA into the large ribosomal subunit, where it forms part of the central protuberance. The chain is Large ribosomal subunit protein uL18 from Desulfosudis oleivorans (strain DSM 6200 / JCM 39069 / Hxd3) (Desulfococcus oleovorans).